A 219-amino-acid chain; its full sequence is tRNA (guanine-N(7)-)-methyltransferase (219 aa).

S-adenosyl-L-methionine-binding residues include Glu-44, Asp-69, Glu-102, and Asn-125. 2 residues coordinate substrate: Lys-129 and Asp-161.

It belongs to the class I-like SAM-binding methyltransferase superfamily. TrmB family.

The catalysed reaction is guanosine(46) in tRNA + S-adenosyl-L-methionine = N(7)-methylguanosine(46) in tRNA + S-adenosyl-L-homocysteine. It participates in tRNA modification; N(7)-methylguanine-tRNA biosynthesis. Catalyzes the formation of N(7)-methylguanine at position 46 (m7G46) in tRNA. The protein is tRNA (guanine-N(7)-)-methyltransferase of Clostridium perfringens (strain SM101 / Type A).